Here is a 70-residue protein sequence, read N- to C-terminus: Homeobox protein CDX (70 aa).

Positions 1 to 60 form a DNA-binding region, homeobox; that stretch reads PDKYRVVYTDYQRLELEKEFHYSRYITMNRKAELAKSLDLTERQIKIWFQNRRAKERKIN.

The protein belongs to the Caudal homeobox family.

It is found in the nucleus. This Lineus sanguineus (Ribbon worm) protein is Homeobox protein CDX (CDX).